The primary structure comprises 238 residues: Uridylate kinase (238 aa).

Residue 12–15 (KLSG) coordinates ATP. The segment at 20-25 (GEKGFG) is involved in allosteric activation by GTP. UMP is bound at residue Gly54. Gly55 and Arg59 together coordinate ATP. UMP is bound by residues Asp72 and 133 to 140 (TGNPYFST). Positions 166 and 169 each coordinate ATP.

It belongs to the UMP kinase family. As to quaternary structure, homohexamer.

The protein resides in the cytoplasm. The catalysed reaction is UMP + ATP = UDP + ADP. The protein operates within pyrimidine metabolism; CTP biosynthesis via de novo pathway; UDP from UMP (UMPK route): step 1/1. Allosterically activated by GTP. Inhibited by UTP. Functionally, catalyzes the reversible phosphorylation of UMP to UDP. This is Uridylate kinase from Clostridium botulinum (strain Langeland / NCTC 10281 / Type F).